The sequence spans 437 residues: Phosphomethylpyrimidine synthase (437 aa).

Substrate is bound by residues Asn-69, Met-98, Tyr-127, His-163, 185–187 (SRG), 226–229 (DACR), and Glu-265. Zn(2+) is bound at residue His-269. Tyr-292 serves as a coordination point for substrate. Residue His-333 participates in Zn(2+) binding. [4Fe-4S] cluster is bound by residues Cys-409, Cys-412, and Cys-416.

Belongs to the ThiC family. [4Fe-4S] cluster is required as a cofactor.

The enzyme catalyses 5-amino-1-(5-phospho-beta-D-ribosyl)imidazole + S-adenosyl-L-methionine = 4-amino-2-methyl-5-(phosphooxymethyl)pyrimidine + CO + 5'-deoxyadenosine + formate + L-methionine + 3 H(+). It participates in cofactor biosynthesis; thiamine diphosphate biosynthesis. In terms of biological role, catalyzes the synthesis of the hydroxymethylpyrimidine phosphate (HMP-P) moiety of thiamine from aminoimidazole ribotide (AIR) in a radical S-adenosyl-L-methionine (SAM)-dependent reaction. The sequence is that of Phosphomethylpyrimidine synthase from Clostridium botulinum (strain Langeland / NCTC 10281 / Type F).